A 260-amino-acid chain; its full sequence is Voltage-dependent calcium channel gamma-6 subunit (260 aa).

The segment at 14 to 33 (RRGAAGRRRAHGQGRSGLTP) is disordered. Residues 15–25 (RGAAGRRRAHG) are compositionally biased toward basic residues. The next 4 helical transmembrane spans lie at 43 to 63 (LLLAAVGATLAVLSVGTEFWV), 143 to 163 (VIAVLGLAVMALGCLCIIMVL), 169 to 189 (FLLRVGAVCFGLSGLLLLVSL), and 221 to 241 (LGCGVGAGLILLLGAGCFLLL).

Belongs to the PMP-22/EMP/MP20 family. CACNG subfamily. Interacts with CACNA1C. Identified in a complex with the L-type calcium channel subunits CACNA1C, CACNA2D1 and either CACNB1 or CACNB2. Detected in heart left ventricle.

It localises to the cell membrane. Regulates the activity of L-type calcium channels that contain CACNA1C as pore-forming subunit. This chain is Voltage-dependent calcium channel gamma-6 subunit (CACNG6), found in Homo sapiens (Human).